We begin with the raw amino-acid sequence, 145 residues long: Superoxide dismutase [Mn/Fe] (145 aa).

Fe(3+) is bound by residues H10 and H64. Positions 10 and 64 each coordinate Mn(2+). The disordered stretch occupies residues 126–145 (TSTANQDTPISEGKKPILGL).

Belongs to the iron/manganese superoxide dismutase family. Mn(2+) serves as cofactor. It depends on Fe(3+) as a cofactor.

The enzyme catalyses 2 superoxide + 2 H(+) = H2O2 + O2. Functionally, destroys superoxide anion radicals which are normally produced within the cells and which are toxic to biological systems. Catalyzes the dismutation of superoxide anion radicals into O2 and H2O2 by successive reduction and oxidation of the transition metal ion at the active site. This chain is Superoxide dismutase [Mn/Fe] (sodA), found in Streptococcus oralis.